Reading from the N-terminus, the 520-residue chain is Nonsense-mediated mRNA decay factor SMG9 (520 aa).

Disordered regions lie at residues methionine 1 to leucine 94, lysine 108 to threonine 143, and lysine 341 to glycine 360. An N-acetylserine modification is found at serine 2. Residues serine 2, serine 4, serine 7, serine 32, and serine 53 each carry the phosphoserine modification. Basic and acidic residues predominate over residues glycine 36 to serine 53. 2 stretches are compositionally biased toward pro residues: residues glutamine 78–leucine 94 and threonine 122–proline 133. Residues proline 342–serine 357 show a composition bias toward low complexity. Serine 451 is modified (phosphoserine).

The protein belongs to the SMG9 family. As to quaternary structure, self-associates to form homodimers and forms heterodimers with SMG8; these assembly forms may represent SMG1C intermediate forms. Component of the SMG1C complex composed of SMG1, SMG8 and SMG9. Interacts with DHX34; the interaction is RNA-independent. In terms of processing, phosphorylated by SMG1.

Involved in nonsense-mediated decay (NMD) of mRNAs containing premature stop codons. Is recruited by release factors to stalled ribosomes together with SMG1 and SMG8 (forming the SMG1C protein kinase complex) and, in the SMG1C complex, is required for the efficient association between SMG1 and SMG8. Plays a role in brain, heart, and eye development. This Homo sapiens (Human) protein is Nonsense-mediated mRNA decay factor SMG9.